A 492-amino-acid polypeptide reads, in one-letter code: Trehalose-phosphatase (492 aa).

The tract at residues Met1–Asp55 is disordered. Residues Gln17–Ala43 are compositionally biased toward basic and acidic residues. 2 residues coordinate Mg(2+): Asp213 and Asp215. The active-site Proton donor/acceptor is Asp215. Residue Gln332–Lys334 coordinates substrate. Asp424 is a binding site for Mg(2+).

This sequence belongs to the gob-1 trehalose phosphatase family. Mg(2+) is required as a cofactor.

The catalysed reaction is alpha,alpha-trehalose 6-phosphate + H2O = alpha,alpha-trehalose + phosphate. With respect to regulation, inhibited by trehalose 6-sulfate. In terms of biological role, catalyzes the hydrolysis of trehalose 6-phosphate to trehalose and phosphate; prevents the accumulation of toxic levels of trehalose 6-phosphate. This Brugia malayi (Filarial nematode worm) protein is Trehalose-phosphatase.